Here is a 279-residue protein sequence, read N- to C-terminus: Oxygen-dependent coproporphyrinogen-III oxidase (279 aa).

Residue Ser-102 coordinates substrate. A divalent metal cation contacts are provided by His-106 and His-116. The Proton donor role is filled by His-116. 118-120 (NTR) provides a ligand contact to substrate. A divalent metal cation contacts are provided by His-149 and His-179. Positions 244–279 (YVEFNLLYDRGTKFGLMTDGNVEAILMSLPPEVKFN) are important for dimerization.

The protein belongs to the aerobic coproporphyrinogen-III oxidase family. Homodimer. A divalent metal cation is required as a cofactor.

It localises to the cytoplasm. The enzyme catalyses coproporphyrinogen III + O2 + 2 H(+) = protoporphyrinogen IX + 2 CO2 + 2 H2O. The protein operates within porphyrin-containing compound metabolism; protoporphyrin-IX biosynthesis; protoporphyrinogen-IX from coproporphyrinogen-III (O2 route): step 1/1. Its function is as follows. Involved in the heme biosynthesis. Catalyzes the aerobic oxidative decarboxylation of propionate groups of rings A and B of coproporphyrinogen-III to yield the vinyl groups in protoporphyrinogen-IX. This is Oxygen-dependent coproporphyrinogen-III oxidase from Rickettsia rickettsii (strain Iowa).